A 458-amino-acid polypeptide reads, in one-letter code: Phosphoglucosamine mutase (458 aa).

Ser102 serves as the catalytic Phosphoserine intermediate. Mg(2+) is bound by residues Ser102, Asp252, Asp254, and Asp256. Ser102 bears the Phosphoserine mark.

The protein belongs to the phosphohexose mutase family. It depends on Mg(2+) as a cofactor. In terms of processing, activated by phosphorylation.

The catalysed reaction is alpha-D-glucosamine 1-phosphate = D-glucosamine 6-phosphate. Catalyzes the conversion of glucosamine-6-phosphate to glucosamine-1-phosphate. This is Phosphoglucosamine mutase from Anaeromyxobacter dehalogenans (strain 2CP-C).